Reading from the N-terminus, the 86-residue chain is Small ribosomal subunit protein uS15c (86 aa).

The protein belongs to the universal ribosomal protein uS15 family. In terms of assembly, part of the 30S ribosomal subunit.

The protein localises to the plastid. The protein resides in the chloroplast. This chain is Small ribosomal subunit protein uS15c (rps15), found in Cryptomeria japonica (Japanese cedar).